Reading from the N-terminus, the 523-residue chain is MSALGTLNSVVRDEIFALNLAFNSDDHPQKVNLSVGAYRSDSGKPWPLPAVQEAEKQLFAEANAFRHEYTTIAGDAGFLEAARDLMFGFDNLQNAAGTAAKLRISSVQTVAGTGANHLGALFLSKYLKPQTVWLSDPTWANHYTIWDLVKVPYKMYPYYSASDGSFDFHGMMSTLESDAQPGDIILLQACAHNPTGLDPSPQQWKDIANLCDRKHLFPFIDAAYQGFATGCTNNDNWIVRYFLNKKPHIDMCVAQSFSKNLGLYGQRVGAFHYVLNEDGKGLRDTVTDHLCQLIRGEYTMGPVAGSDIVKRVLTNPVLRAQWFENMRSMSFRIVAMRKALFDELTRLKTPGSWKHITEMIGMFSYIGLSPTQVEVLKTKYHIYLLQSSRASMSGLNSTNVIYVARAIDETQAFPDLSWRPLPPRSGHPIYHGLEPGQVILPKGTVRFASWRSLPVDTEFNRDVPVVLRDGVTIYLDVFRPTETARSSPPYTSEANMERRGQAAYSSTPLRRIGLTFLNRTLKI.

Belongs to the class-I pyridoxal-phosphate-dependent aminotransferase family. As to quaternary structure, homodimer. Pyridoxal 5'-phosphate is required as a cofactor.

It is found in the cytoplasm. The catalysed reaction is L-tyrosine + 2-oxoglutarate = 3-(4-hydroxyphenyl)pyruvate + L-glutamate. It functions in the pathway secondary metabolite biosynthesis. Its function is as follows. Nonribosomal peptide synthetase that mediates the biosynthesis of usterphenyllins and uscandidusins, p-terphenyl derivatives. Within the pathway, ucdG is probably involved in the conversion of L-tyrosine into 4-hydroxyphenylpyruvate (HPPA) as a precursor for the usterphenyllin and uscandidusin biosynthesis. UcdE further prenylates position C-14 of ring C of usterphenyllin B to form usterphenyllin A. The pathway begin with the biosynthesis of 4-hydroxyphenylpyruvate (HPPA) from L-tyrosine, possibly by the aminotransferase ucdG. The nonribosomal peptide synthetase ucdA then condenses two HPPA units to produce atromentin. The key step in this pathway is the reduction and dehydration of atromentin to form a terphenyl triol intermediate, performed by the NAD-dependent dehydrogenase ucdB. Further O-methylation by the methyltransferase ucdC forms terphenyllin carrying two methoxy moieties at C-9 and C-12, and subsequent dihydroxylation at C-3 of ring A and C-15 of ring C by the flavin-dependent oxygenase ucdD leads to 3,15-dihydroxyterphenyllin. Prenylation by ucdE at position C-5 of ring A forms usterphenyllin B, and is followed by a second prenylation at position C-14 of ring C to form usterphenyllin A. The following furan ring formation that leads to uscandidusins A and B was proven to be an unexpected spontaneous non-enzymatic reaction. The polypeptide is L-tyrosine:2-oxoglutarate aminotransferase ucdG (Aspergillus ustus).